Reading from the N-terminus, the 266-residue chain is Thiazole synthase (266 aa).

K95 acts as the Schiff-base intermediate with DXP in catalysis. Residues G156, 182–183 (AG), and 204–205 (NT) contribute to the 1-deoxy-D-xylulose 5-phosphate site.

The protein belongs to the ThiG family. In terms of assembly, homotetramer. Forms heterodimers with either ThiH or ThiS.

The protein localises to the cytoplasm. It catalyses the reaction [ThiS sulfur-carrier protein]-C-terminal-Gly-aminoethanethioate + 2-iminoacetate + 1-deoxy-D-xylulose 5-phosphate = [ThiS sulfur-carrier protein]-C-terminal Gly-Gly + 2-[(2R,5Z)-2-carboxy-4-methylthiazol-5(2H)-ylidene]ethyl phosphate + 2 H2O + H(+). It functions in the pathway cofactor biosynthesis; thiamine diphosphate biosynthesis. Catalyzes the rearrangement of 1-deoxy-D-xylulose 5-phosphate (DXP) to produce the thiazole phosphate moiety of thiamine. Sulfur is provided by the thiocarboxylate moiety of the carrier protein ThiS. In vitro, sulfur can be provided by H(2)S. This chain is Thiazole synthase, found in Shewanella denitrificans (strain OS217 / ATCC BAA-1090 / DSM 15013).